Reading from the N-terminus, the 137-residue chain is ATP synthase epsilon chain, chloroplastic (137 aa).

The protein belongs to the ATPase epsilon chain family. In terms of assembly, F-type ATPases have 2 components, CF(1) - the catalytic core - and CF(0) - the membrane proton channel. CF(1) has five subunits: alpha(3), beta(3), gamma(1), delta(1), epsilon(1). CF(0) has three main subunits: a, b and c.

It is found in the plastid. The protein localises to the chloroplast thylakoid membrane. Functionally, produces ATP from ADP in the presence of a proton gradient across the membrane. This is ATP synthase epsilon chain, chloroplastic from Pinus thunbergii (Japanese black pine).